The sequence spans 99 residues: Acylphosphatase-1 (99 aa).

A2 is modified (N-acetylalanine). Residues 9–99 (SVDYEVSGRV…LEHTDFQIRK (91 aa)) form the Acylphosphatase-like domain. Catalysis depends on residues R24 and N42.

Belongs to the acylphosphatase family. Organ-common type isozyme is found in many different tissues.

It catalyses the reaction an acyl phosphate + H2O = a carboxylate + phosphate + H(+). The protein is Acylphosphatase-1 (ACYP1) of Gallus gallus (Chicken).